A 386-amino-acid polypeptide reads, in one-letter code: Succinate--CoA ligase [ADP-forming] subunit beta (386 aa).

In terms of domain architecture, ATP-grasp spans 9 to 244 (KEILRSYGVS…LDEEDPKEVE (236 aa)). ATP is bound by residues K46, 53 to 55 (GRG), E99, C102, and E107. Residues N199 and D213 each contribute to the Mg(2+) site. Substrate-binding positions include N264 and 321–323 (GIM).

This sequence belongs to the succinate/malate CoA ligase beta subunit family. As to quaternary structure, heterotetramer of two alpha and two beta subunits. Mg(2+) is required as a cofactor.

The enzyme catalyses succinate + ATP + CoA = succinyl-CoA + ADP + phosphate. The catalysed reaction is GTP + succinate + CoA = succinyl-CoA + GDP + phosphate. The protein operates within carbohydrate metabolism; tricarboxylic acid cycle; succinate from succinyl-CoA (ligase route): step 1/1. Its function is as follows. Succinyl-CoA synthetase functions in the citric acid cycle (TCA), coupling the hydrolysis of succinyl-CoA to the synthesis of either ATP or GTP and thus represents the only step of substrate-level phosphorylation in the TCA. The beta subunit provides nucleotide specificity of the enzyme and binds the substrate succinate, while the binding sites for coenzyme A and phosphate are found in the alpha subunit. The chain is Succinate--CoA ligase [ADP-forming] subunit beta from Geobacillus thermodenitrificans (strain NG80-2).